We begin with the raw amino-acid sequence, 204 residues long: Protein G1-like5 (204 aa).

Disordered stretches follow at residues 1-45 and 157-204; these read MEFV…ESQK and RARG…GAAA. Over residues 26 to 39 the composition is skewed to low complexity; that stretch reads TGATSASAAGASPS. An ALOG domain is found at 40–167; the sequence is RYESQKRRDW…ARGVSYEKKK (128 aa). The Nuclear localization signal motif lies at 165–169; sequence KKKRK.

This sequence belongs to the plant homeotic and developmental regulators ALOG protein family.

Its subcellular location is the nucleus. Its function is as follows. Probable transcription regulator that acts as a developmental regulator by promoting cell growth in response to light. The chain is Protein G1-like5 (G1L5) from Oryza sativa subsp. japonica (Rice).